The chain runs to 622 residues: Low affinity potassium transport system protein Kup (622 aa).

12 consecutive transmembrane segments (helical) span residues 12–32, 49–69, 103–123, 137–157, 165–185, 213–233, 247–267, 276–296, 337–357, 363–383, 396–416, and 419–439; these read ITLA…LYTL, VFGF…IKYL, VIMG…TPAI, PQLD…LFMI, VGKL…VLGL, VSFI…ALYA, WFTV…ALLL, PFFL…AALA, IYIP…IVSF, LAAA…ILST, FVAL…SANL, and LLSG…IMTT.

It belongs to the HAK/KUP transporter (TC 2.A.72) family.

The protein localises to the cell inner membrane. The catalysed reaction is K(+)(in) + H(+)(in) = K(+)(out) + H(+)(out). Its function is as follows. Responsible for the low-affinity transport of potassium into the cell. Likely operates as a K(+):H(+) symporter. The polypeptide is Low affinity potassium transport system protein Kup (Salmonella gallinarum (strain 287/91 / NCTC 13346)).